Reading from the N-terminus, the 245-residue chain is Octanoyltransferase (245 aa).

One can recognise a BPL/LPL catalytic domain in the interval 54–242; the sequence is QNAHEQVWLL…SFEQIFGPII (189 aa). Substrate contacts are provided by residues 93 to 100, 173 to 175, and 186 to 188; these read RGGEFTYH, AIG, and GVS. C204 (acyl-thioester intermediate) is an active-site residue.

Belongs to the LipB family.

The protein localises to the cytoplasm. It catalyses the reaction octanoyl-[ACP] + L-lysyl-[protein] = N(6)-octanoyl-L-lysyl-[protein] + holo-[ACP] + H(+). It participates in protein modification; protein lipoylation via endogenous pathway; protein N(6)-(lipoyl)lysine from octanoyl-[acyl-carrier-protein]: step 1/2. Its function is as follows. Catalyzes the transfer of endogenously produced octanoic acid from octanoyl-acyl-carrier-protein onto the lipoyl domains of lipoate-dependent enzymes. Lipoyl-ACP can also act as a substrate although octanoyl-ACP is likely to be the physiological substrate. The protein is Octanoyltransferase of Bartonella henselae (strain ATCC 49882 / DSM 28221 / CCUG 30454 / Houston 1) (Rochalimaea henselae).